Consider the following 557-residue polypeptide: MPSDIEIARAATLKPIAQVAEKLGIPDEALHNYGKHIAKIDHDFIASLEGKPEGKLVLVTAISPTPAGEGKTTTTVGLGDALNRIGKRAVMCLREPSLGPCFGMKGGAAGGGKAQVVPMEQINLHFTGDFHAITSAHSLAAALIDNHIYWANELNIDVRRIHWRRVVDMNDRALRAINQSLGGVANGFPREDGFDITVASEVMAVFCLAKNLADLEERLGRIVIAETRDRKPVTLADVKATGAMTVLLKDALQPNLVQTLEGNPALIHGGPFANIAHGCNSVIATRTGLRLADYTVTEAGFGADLGAEKFIDIKCRQTGLKPSAVVIVATIRALKMHGGVNKKDLQAENLDALEKGFANLERHVNNVRSFGLPVVVGVNHFFQDTDAEHARLKELCRDRLQVEAITCKHWAEGGAGAEALAQAVVKLAEGEQKPLTFAYETETKITDKIKAIATKLYGAADIQIESKAATKLAGFEKDGYGKLPVCMAKTQYSFSTDPTLMGAPSGHLVSVRDVRLSAGAGFVVVICGEIMTMPGLPKVPAADTIRLDANGQIDGLF.

65–72 (TPAGEGKT) contributes to the ATP binding site.

This sequence belongs to the formate--tetrahydrofolate ligase family.

It catalyses the reaction (6S)-5,6,7,8-tetrahydrofolate + formate + ATP = (6R)-10-formyltetrahydrofolate + ADP + phosphate. It participates in one-carbon metabolism; tetrahydrofolate interconversion. The protein is Formate--tetrahydrofolate ligase of Methylorubrum extorquens (strain PA1) (Methylobacterium extorquens).